The sequence spans 715 residues: Methylcrotonoyl-CoA carboxylase subunit alpha, mitochondrial (715 aa).

The N-terminal 38 residues, 1-38 (MAAAALLAAVDRNQLRRVPILLLQPREWPWKHRTVKYG), are a transit peptide targeting the mitochondrion. The Biotin carboxylation domain maps to 45 to 490 (ITKVLIANRG…HTDFIPQHHK (446 aa)). K159 contacts ATP. The ATP-grasp domain occupies 163–360 (KSIMAAAGVP…LVEWQLRIAA (198 aa)). The residue at position 193 (K193) is an N6-acetyllysine. ATP contacts are provided by residues K201 and 207–208 (GG). N6-acetyllysine is present on K233. Residues H251, H278, and E318 each coordinate ATP. R335 is an active-site residue. K490 carries the N6-acetyllysine modification. An N6-acetyllysine; alternate modification is found at K577. N6-succinyllysine; alternate is present on K577. A Biotinyl-binding domain is found at 622-711 (SIEVGIPVPK…NRHAPLVEFE (90 aa)). K677 is modified (N6-biotinyllysine).

Probably a dodecamer composed of six biotin-containing alpha subunits (MCCC1) and six beta (MCCC2) subunits. Interacts (via the biotin carboxylation domain) with SIRT4. Biotin is required as a cofactor. Post-translationally, acetylated.

It localises to the mitochondrion matrix. It catalyses the reaction 3-methylbut-2-enoyl-CoA + hydrogencarbonate + ATP = 3-methyl-(2E)-glutaconyl-CoA + ADP + phosphate + H(+). Its pathway is amino-acid degradation; L-leucine degradation; (S)-3-hydroxy-3-methylglutaryl-CoA from 3-isovaleryl-CoA: step 2/3. Functionally, biotin-attachment subunit of the 3-methylcrotonyl-CoA carboxylase, an enzyme that catalyzes the conversion of 3-methylcrotonyl-CoA to 3-methylglutaconyl-CoA, a critical step for leucine and isovaleric acid catabolism. In Rattus norvegicus (Rat), this protein is Methylcrotonoyl-CoA carboxylase subunit alpha, mitochondrial.